Consider the following 64-residue polypeptide: Bubble protein (64 aa).

Cystine bridges form between cysteine 3–cysteine 30, cysteine 18–cysteine 38, cysteine 28–cysteine 54, and cysteine 49–cysteine 64.

It localises to the secreted. In terms of biological role, may act as a toxin. May recognize a molecule or part of a molecule with a negatively charged surface potential. The polypeptide is Bubble protein (Penicillium brevicompactum).